Reading from the N-terminus, the 185-residue chain is MISGSDLRKGTTFELDGQVYTVIDFLHVKPGKGAAFVRTKLRNVIMGGVTDRTFNPTDKLQEAIIERKEMQYLYSDGELYYFMDQETFEQIPLNHEKVEDAIKFLKENMNAVIKFYKGEAFSVEAPNFVELLITECEPSVKGNTATTAMKTAVVETGATVMVPMFVEEGNTIRIDTRTGEYMERV.

It belongs to the elongation factor P family.

It is found in the cytoplasm. The protein operates within protein biosynthesis; polypeptide chain elongation. Its function is as follows. Involved in peptide bond synthesis. Stimulates efficient translation and peptide-bond synthesis on native or reconstituted 70S ribosomes in vitro. Probably functions indirectly by altering the affinity of the ribosome for aminoacyl-tRNA, thus increasing their reactivity as acceptors for peptidyl transferase. The chain is Elongation factor P from Clostridium perfringens (strain ATCC 13124 / DSM 756 / JCM 1290 / NCIMB 6125 / NCTC 8237 / Type A).